Here is an 806-residue protein sequence, read N- to C-terminus: Dimethyl sulfoxide reductase DmsA (806 aa).

Positions 1-35 (MSNFNQISRRDFVKASSAGAALAVSNLTLPFNVMA) form a signal peptide, tat-type signal. Residues 47 to 109 (ERIVWSACTV…SMRRRVYNPD (63 aa)) form the 4Fe-4S Mo/W bis-MGD-type domain. [4Fe-4S] cluster is bound by residues Cys-54, Cys-58, Cys-62, and Cys-95. Mo-bis(molybdopterin guanine dinucleotide)-binding positions include 163–167 (LGGTM), Ser-196, 236–237 (ET), 262–263 (ID), 283–285 (GTD), 378–379 (WG), Arg-382, Asn-480, 504–505 (ID), His-693, 699–701 (HST), Asn-780, and 796–797 (QH). The disordered stretch occupies residues 786 to 806 (RPSPLAKGNPQHSNLVQVERL). Residues 795-806 (PQHSNLVQVERL) show a composition bias toward polar residues.

Belongs to the prokaryotic molybdopterin-containing oxidoreductase family. Heterotrimeric enzyme composed of a catalytic heterodimer (DmsAB) and a membrane anchor protein (DmsC). [4Fe-4S] cluster is required as a cofactor. Requires Mo-bis(molybdopterin guanine dinucleotide) as cofactor. Post-translationally, predicted to be exported by the Tat system. The position of the signal peptide cleavage has not been experimentally proven.

The protein resides in the cell membrane. The enzyme catalyses dimethyl sulfide + a menaquinone + H2O = dimethyl sulfoxide + a menaquinol. In terms of biological role, catalyzes the reduction of dimethyl sulfoxide (DMSO) to dimethyl sulfide (DMS). The terminal DMSO reductase can also use various sulfoxides and N-oxide compounds as terminal electron acceptor in addition to DMSO. In Haemophilus influenzae (strain ATCC 51907 / DSM 11121 / KW20 / Rd), this protein is Dimethyl sulfoxide reductase DmsA (dmsA).